The chain runs to 74 residues: Translation initiation factor IF-1 (74 aa).

The 72-residue stretch at 1–72 folds into the S1-like domain; sequence MGKEDVIRME…TRGRIVYRKK (72 aa).

Belongs to the IF-1 family. Component of the 30S ribosomal translation pre-initiation complex which assembles on the 30S ribosome in the order IF-2 and IF-3, IF-1 and N-formylmethionyl-tRNA(fMet); mRNA recruitment can occur at any time during PIC assembly.

The protein resides in the cytoplasm. In terms of biological role, one of the essential components for the initiation of protein synthesis. Stabilizes the binding of IF-2 and IF-3 on the 30S subunit to which N-formylmethionyl-tRNA(fMet) subsequently binds. Helps modulate mRNA selection, yielding the 30S pre-initiation complex (PIC). Upon addition of the 50S ribosomal subunit IF-1, IF-2 and IF-3 are released leaving the mature 70S translation initiation complex. This is Translation initiation factor IF-1 from Thermotoga maritima (strain ATCC 43589 / DSM 3109 / JCM 10099 / NBRC 100826 / MSB8).